The primary structure comprises 311 residues: p-hydroxybenzoic acid efflux pump subunit AaeA (311 aa).

Residues 11-31 (VGITVLVVVLAVIAIFNVWAF) form a helical membrane-spanning segment.

Belongs to the membrane fusion protein (MFP) (TC 8.A.1) family.

It is found in the cell inner membrane. Functionally, forms an efflux pump with AaeB. The polypeptide is p-hydroxybenzoic acid efflux pump subunit AaeA (Yersinia pseudotuberculosis serotype O:1b (strain IP 31758)).